The following is a 222-amino-acid chain: Glutathione transferase GST 23 (222 aa).

Residues 4–83 (KGVKVLGMWA…YIDEVWKGGY (80 aa)) form the GST N-terminal domain. Residues S14, K41, V55, and 67–68 (ES) contribute to the glutathione site. The GST C-terminal domain occupies 89–220 (DPYERAQARF…ANKARREQLL (132 aa)).

The protein belongs to the GST superfamily.

The enzyme catalyses RX + glutathione = an S-substituted glutathione + a halide anion + H(+). Functionally, involved in multiple disease resistance (MDR). The chain is Glutathione transferase GST 23 from Zea mays (Maize).